A 342-amino-acid chain; its full sequence is Aspartate carbamoyltransferase catalytic subunit (342 aa).

2 residues coordinate carbamoyl phosphate: arginine 59 and threonine 60. Residue lysine 87 coordinates L-aspartate. 3 residues coordinate carbamoyl phosphate: arginine 109, histidine 142, and glutamine 145. L-aspartate contacts are provided by arginine 182 and arginine 253. Carbamoyl phosphate-binding residues include glycine 294 and proline 295.

Belongs to the aspartate/ornithine carbamoyltransferase superfamily. ATCase family. Heterododecamer (2C3:3R2) of six catalytic PyrB chains organized as two trimers (C3), and six regulatory PyrI chains organized as three dimers (R2).

It carries out the reaction carbamoyl phosphate + L-aspartate = N-carbamoyl-L-aspartate + phosphate + H(+). The protein operates within pyrimidine metabolism; UMP biosynthesis via de novo pathway; (S)-dihydroorotate from bicarbonate: step 2/3. Catalyzes the condensation of carbamoyl phosphate and aspartate to form carbamoyl aspartate and inorganic phosphate, the committed step in the de novo pyrimidine nucleotide biosynthesis pathway. The protein is Aspartate carbamoyltransferase catalytic subunit of Synechococcus sp. (strain WH7803).